The primary structure comprises 175 residues: ATP-dependent protease subunit HslV (175 aa).

Thr-2 is a catalytic residue. 3 residues coordinate Na(+): Ala-156, Cys-159, and Thr-162.

This sequence belongs to the peptidase T1B family. HslV subfamily. In terms of assembly, a double ring-shaped homohexamer of HslV is capped on each side by a ring-shaped HslU homohexamer. The assembly of the HslU/HslV complex is dependent on binding of ATP.

Its subcellular location is the cytoplasm. It carries out the reaction ATP-dependent cleavage of peptide bonds with broad specificity.. Allosterically activated by HslU binding. Its function is as follows. Protease subunit of a proteasome-like degradation complex believed to be a general protein degrading machinery. The protein is ATP-dependent protease subunit HslV of Rhizobium etli (strain ATCC 51251 / DSM 11541 / JCM 21823 / NBRC 15573 / CFN 42).